A 181-amino-acid chain; its full sequence is Probable pyruvoyl-dependent arginine decarboxylase (181 aa).

Pyruvic acid (Ser) is present on Ser43.

It belongs to the PdaD family. The cofactor is pyruvate.

It carries out the reaction L-arginine + H(+) = agmatine + CO2. The chain is Probable pyruvoyl-dependent arginine decarboxylase from Chlorobium phaeobacteroides (strain BS1).